Reading from the N-terminus, the 99-residue chain is MAAVLREGDELIMHLMIQPKASRDQIVGLHGEELKVAITAPPVDGQANSHLIKYLAKQFKVAKGQVRIVRGELGRHKTVAIEAPRQIPAEVSALLDNQG.

The protein belongs to the UPF0235 family.

In Aeromonas hydrophila subsp. hydrophila (strain ATCC 7966 / DSM 30187 / BCRC 13018 / CCUG 14551 / JCM 1027 / KCTC 2358 / NCIMB 9240 / NCTC 8049), this protein is UPF0235 protein AHA_3661.